Consider the following 67-residue polypeptide: Large ribosomal subunit protein uL30 (67 aa).

The protein belongs to the universal ribosomal protein uL30 family. In terms of assembly, part of the 50S ribosomal subunit.

This Sorangium cellulosum (strain So ce56) (Polyangium cellulosum (strain So ce56)) protein is Large ribosomal subunit protein uL30.